A 291-amino-acid chain; its full sequence is MTLSWPSPAKLNLFLYITGKRPDGYHNLQTLFQFLDYGDTLTFTPRNDTQLTILTPVEGVADEDNLIIKAAKLLRQYCYQHHIPLRYQGADISIDKKLPMGGGLGGGSSNAATTLIALNYHWQAGLSDETLATLGVTLGADVPVFVKGHAAFAEGIGEILTPASPKECWYLVAHPGISIPTPTIFTDPELKRNSPIRSLGALLQAPFANDCEMIARKRFREVEYLLSWLLEYAPSRLTGTGACVFGEFESQEAASEVLINAPEWVHGFVAQGVNISPVHLFRSRIPVLLHP.

Residue Lys-10 is part of the active site. Pro-99 to Ser-109 contacts ATP. The active site involves Asp-141.

Belongs to the GHMP kinase family. IspE subfamily. As to quaternary structure, homodimer.

It catalyses the reaction 4-CDP-2-C-methyl-D-erythritol + ATP = 4-CDP-2-C-methyl-D-erythritol 2-phosphate + ADP + H(+). It participates in isoprenoid biosynthesis; isopentenyl diphosphate biosynthesis via DXP pathway; isopentenyl diphosphate from 1-deoxy-D-xylulose 5-phosphate: step 3/6. Catalyzes the phosphorylation of the position 2 hydroxy group of 4-diphosphocytidyl-2C-methyl-D-erythritol. The chain is 4-diphosphocytidyl-2-C-methyl-D-erythritol kinase from Proteus mirabilis (strain HI4320).